Reading from the N-terminus, the 307-residue chain is Elongation factor Ts (307 aa).

Residues 79–82 (TDFV) are involved in Mg(2+) ion dislocation from EF-Tu.

Belongs to the EF-Ts family.

It localises to the cytoplasm. Functionally, associates with the EF-Tu.GDP complex and induces the exchange of GDP to GTP. It remains bound to the aminoacyl-tRNA.EF-Tu.GTP complex up to the GTP hydrolysis stage on the ribosome. The chain is Elongation factor Ts from Bartonella tribocorum (strain CIP 105476 / IBS 506).